Here is a 1141-residue protein sequence, read N- to C-terminus: PR domain zinc finger protein 15 (1141 aa).

The SET domain maps to 49 to 159 (PNLEIRRLED…PGTELRVWYA (111 aa)). The C2H2-type 1 zinc-finger motif lies at 197-219 (WACKVCSATFLELQLLNEHLLGH). A disordered region spans residues 224-283 (KSLPPGSQSEAAAPEKEQDTPRGEPPAVPESENVATKEQKKKPRRGRKPKVSKAEQPLVI). Over residues 236 to 245 (APEKEQDTPR) the composition is skewed to basic and acidic residues. The segment covering 262–274 (QKKKPRRGRKPKV) has biased composition (basic residues). 4 C2H2-type zinc fingers span residues 372-394 (YQCN…VRSH), 399-422 (FKCE…SYKH), 460-482 (FQCE…KKKH), and 487-509 (FACE…QRRH). A Glycyl lysine isopeptide (Lys-Gly) (interchain with G-Cter in SUMO2) cross-link involves residue lysine 517. 2 C2H2-type zinc fingers span residues 536 to 558 (SGCP…LLTH) and 563 to 585 (YTCE…IHVH). A disordered region spans residues 604–623 (IGISSEENDDNSDESADSEP). Positions 609 to 620 (EENDDNSDESAD) are enriched in acidic residues. C2H2-type zinc fingers lie at residues 626-649 (YSCK…MEVH), 654-676 (YGCS…MVIH), 690-712 (HPCE…KLIH), 718-740 (HACE…MRVH), 746-768 (YLCA…MKLH), 774-796 (YECK…CKRH), 802-824 (FMCE…KLIH), 830-853 (WTCS…QLTH), and 859-882 (QSCQ…RRKH). 2 disordered regions span residues 922–973 (AEGK…DETN) and 1108–1141 (QTDV…MYSY). Positions 927–938 (GKAAKRSHKRKQ) are enriched in basic residues. Over residues 1121–1141 (PQQAAQPQVQAEQQQQQMYSY) the composition is skewed to low complexity.

It belongs to the class V-like SAM-binding methyltransferase superfamily. As to expression, detected in all tissues examined.

It is found in the nucleus. In terms of biological role, sequence-specific DNA-binding transcriptional regulator. Plays a role as a molecular node in a transcriptional network regulating embryonic development and cell fate decision. Stimulates the expression of upstream key transcriptional activators and repressors of the Wnt/beta-catenin and MAPK/ERK pathways, respectively, that are essential for naive pluripotency and self-renewal maintenance of embryonic stem cells (ESCs). Specifically promotes SPRY1 and RSPO1 transcription activation through recognition and direct binding of a specific DNA sequence in their promoter regions. Involved in early embryo development. Also plays a role in induced pluripotent stem cells (iPSCs) reprogramming. The sequence is that of PR domain zinc finger protein 15 from Homo sapiens (Human).